We begin with the raw amino-acid sequence, 164 residues long: Neurotrophin-3 (164 aa).

Positions 1 to 3 are cleaved as a signal peptide; that stretch reads IQS. A propeptide spanning residues 4–120 is cleaved from the precursor; it reads TNMDQQGSLT…ALNRTSRRKR (117 aa). N-linked (GlcNAc...) asparagine glycosylation occurs at Asn113.

This sequence belongs to the NGF-beta family.

It is found in the secreted. Seems to promote the survival of visceral and proprioceptive sensory neurons. This chain is Neurotrophin-3 (NTF3), found in Sanzinia madagascariensis (Madagascar tree boa).